The chain runs to 95 residues: MTEQQWNFAGIEAAASAIQGNVTSIHSLLDEGKQSLTKLAAAWGGSGSEAYQGVQQKWDATATELNNALQNLARTISEAGQAMASTEGNVTGMFA.

Transmembrane regions (helical) follow at residues 11-43 (IEAAASAIQGNVTSIHSLLDEGKQSLTKLAAAW) and 49-85 (EAYQGVQQKWDATATELNNALQNLARTISEAGQAMAS). Residues 56-87 (QKWDATATELNNALQNLARTISEAGQAMASTE) adopt a coiled-coil conformation.

This sequence belongs to the WXG100 family. ESAT-6 subfamily. In terms of assembly, forms a tight 1:1 complex with EsxB (CFP-10).

The protein localises to the secreted. It localises to the host membrane. A secreted protein. Acts as a strong host T-cell antigen. Plays a number of roles in modulating the host's immune response to infection as well as being responsible for bacterial escape into the host cytoplasm. This Mycobacterium bovis (strain ATCC BAA-935 / AF2122/97) protein is 6 kDa early secretory antigenic target (esxA).